We begin with the raw amino-acid sequence, 500 residues long: uncharacterized protein (500 aa).

Over residues 1-13 the composition is skewed to low complexity; sequence MEPSQRSGSFSSI. Residues 1-23 are disordered; that stretch reads MEPSQRSGSFSSISRRRSRVDSR. Serine 9 is modified (phosphoserine). 12 consecutive transmembrane segments (helical) span residues 87 to 107, 126 to 146, 156 to 176, 183 to 203, 225 to 245, 261 to 281, 312 to 332, 351 to 371, 380 to 400, 408 to 428, 445 to 465, and 471 to 491; these read VSIA…AVAL, LVIG…LCFA, LYFR…LLYC, WIYL…TFLY, MNIL…GILA, VASW…IFFF, FLLF…NGYQ, GNFI…SSFL, IMLG…VLDA, VYFF…APLI, IVVQ…GGAI, and VGFI…LIFM.

The protein belongs to the major facilitator superfamily.

It is found in the golgi apparatus. The protein localises to the membrane. This is an uncharacterized protein from Schizosaccharomyces pombe (strain 972 / ATCC 24843) (Fission yeast).